Reading from the N-terminus, the 192-residue chain is Xanthine phosphoribosyltransferase (192 aa).

Xanthine is bound by residues Leu-20 and Asn-27. 128 to 132 (ANGDA) serves as a coordination point for 5-phospho-alpha-D-ribose 1-diphosphate. Lys-156 contributes to the xanthine binding site.

Belongs to the purine/pyrimidine phosphoribosyltransferase family. Xpt subfamily. As to quaternary structure, homodimer.

The protein localises to the cytoplasm. It carries out the reaction XMP + diphosphate = xanthine + 5-phospho-alpha-D-ribose 1-diphosphate. The protein operates within purine metabolism; XMP biosynthesis via salvage pathway; XMP from xanthine: step 1/1. Its function is as follows. Converts the preformed base xanthine, a product of nucleic acid breakdown, to xanthosine 5'-monophosphate (XMP), so it can be reused for RNA or DNA synthesis. The polypeptide is Xanthine phosphoribosyltransferase (Staphylococcus epidermidis (strain ATCC 35984 / DSM 28319 / BCRC 17069 / CCUG 31568 / BM 3577 / RP62A)).